Consider the following 171-residue polypeptide: Serine acetyltransferase (171 aa).

The protein belongs to the transferase hexapeptide repeat family.

It is found in the cytoplasm. The catalysed reaction is L-serine + acetyl-CoA = O-acetyl-L-serine + CoA. Its pathway is amino-acid biosynthesis; L-cysteine biosynthesis; L-cysteine from L-serine: step 1/2. This Helicobacter pylori (strain ATCC 700392 / 26695) (Campylobacter pylori) protein is Serine acetyltransferase (cysE).